The primary structure comprises 151 residues: MNNDKLQRMVENLSEEKFGRTFRHCAYFNKRLRTTGGRYLLKSHDIEINPKQYEHYGEDAVVKIILHELCHYHLHIAGKGYQHKDQDFKRLSQQVGAPRFCNSIESYQQRANYEYYCTKCHAKYIRIRKVDTNRMRCGHCNGKLRMKRQLK.

In terms of domain architecture, SprT-like spans 6–147 (LQRMVENLSE…GHCNGKLRMK (142 aa)). Histidine 67 lines the Zn(2+) pocket. Residue glutamate 68 is part of the active site. Residue histidine 71 participates in Zn(2+) binding.

The protein belongs to the SprT family. Requires Zn(2+) as cofactor.

It localises to the cytoplasm. This Staphylococcus aureus (strain Mu3 / ATCC 700698) protein is Protein SprT-like.